The sequence spans 681 residues: DNA-directed RNA polymerase subunit beta' (681 aa).

The Zn(2+) site is built by Cys-69, Cys-71, Cys-87, and Cys-90. Asp-489, Asp-491, and Asp-493 together coordinate Mg(2+).

The protein belongs to the RNA polymerase beta' chain family. RpoC1 subfamily. As to quaternary structure, in plastids the minimal PEP RNA polymerase catalytic core is composed of four subunits: alpha, beta, beta', and beta''. When a (nuclear-encoded) sigma factor is associated with the core the holoenzyme is formed, which can initiate transcription. It depends on Mg(2+) as a cofactor. The cofactor is Zn(2+).

It is found in the plastid. It localises to the chloroplast. It catalyses the reaction RNA(n) + a ribonucleoside 5'-triphosphate = RNA(n+1) + diphosphate. Functionally, DNA-dependent RNA polymerase catalyzes the transcription of DNA into RNA using the four ribonucleoside triphosphates as substrates. The sequence is that of DNA-directed RNA polymerase subunit beta' from Solanum bulbocastanum (Wild potato).